The primary structure comprises 491 residues: MVFGEFFHRPGPDEELVNLNVGGFKQSVDQSTLLRFPHTRLGKLLTCHSEEAILELCDDYSVADKEYYFDRNPSLFRYVLNFYYTGKLHVMEELCVFSFCQEIEYWGINELFIDSCCSNRYQERKEENHEKDWDQKSNDVSTDTSFEESSVFEKELEKFDQLRFGQLRKKIWIRMENPAYCLSAKLIAISSLSVVLASIVAMCVHSMSEFQNEDGEVDDPVLEGVEIACIAWFTGELAVRLVAAPCQKKFWKNPLNIIDFVSIIPFYATLAVDTKEEESEDIENMGKVVQILRLMRIFRILKLARHSVGLRSLGATLRHSYHEVGLLLLFLSVGISIFSVLIYSVEKDDHTSSLTSIPICWWWATISMTTVGYGDTHPVTLAGKLIASTCIICGILVVALPITIIFNKFSKYYQKQKDIDVDQCSEDPPEKCPELPYFNIRDLYAQRVHAFITSLSSVGIVVSDPDSTDASSIEDNEDVYNTASLENCTAK.

Residues M1–L182 lie on the Cytoplasmic side of the membrane. The chain crosses the membrane as a helical span at residues S183–V204. Residues H205 to P220 lie on the Extracellular side of the membrane. The helical transmembrane segment at V221–A243 threads the bilayer. Over A244–P254 the chain is Cytoplasmic. The chain crosses the membrane as a helical span at residues L255 to K275. Residues E276–M285 are Extracellular-facing. A helical; Voltage-sensor transmembrane segment spans residues G286 to H306. The Cytoplasmic portion of the chain corresponds to S307–Y321. A helical membrane pass occupies residues H322 to Y343. Residues S344–I357 are Extracellular-facing. An intramembrane region (helical) is located at residues P358 to T369. The short motif at T370 to D375 is the Selectivity filter element. Residues T370–H377 lie within the membrane without spanning it. Over P378 to K384 the chain is Extracellular. A helical transmembrane segment spans residues L385 to Y413. The Cytoplasmic segment spans residues Q414–K491.

The protein belongs to the potassium channel family. S (TC 1.A.1.2) subfamily. Kv9.3/KCNS3 sub-subfamily. As to quaternary structure, heterotetramer with KCNB1. Does not form homomultimers.

The protein localises to the cell membrane. Functionally, potassium channel regulatory subunit that modulates the delayed rectifier potassium channel activity of KCNB1 by namely slowing down the deactivation and inactivation time constants. While it does not form functional channel on its own, it can form functional heterotetrameric channels with KCNB1. The protein is Delayed-rectifier potassium channel regulatory subunit KCNS3 of Oryctolagus cuniculus (Rabbit).